A 314-amino-acid polypeptide reads, in one-letter code: Olfactory receptor 5B3 (314 aa).

Over 1–23 (MENKTEVTQFILLGLTNDSELQV) the chain is Extracellular. N3 and N17 each carry an N-linked (GlcNAc...) asparagine glycan. A helical transmembrane segment spans residues 24-44 (PLFITFPFIYIITLVGNLGII). Topologically, residues 45–52 (VLIFWDSC) are cytoplasmic. Residues 53-73 (LHNPMYFFLSNLSLVDFCYSS) form a helical membrane-spanning segment. The Extracellular segment spans residues 74–97 (AVTPIVMAGFLIEDKVISYNACAA). C95 and C187 are disulfide-bonded. Residues 98–118 (QMYIFVAFATVENYLLASMAY) form a helical membrane-spanning segment. The Cytoplasmic segment spans residues 119-131 (DRYAAVCKPLHYT). The helical transmembrane segment at 132 to 152 (TTMTTTVCARLAIGSYLCGFL) threads the bilayer. The N-linked (GlcNAc...) asparagine glycan is linked to N153. Residues 153–194 (NASIHTGDTFSLSFCKSNEVHHFFCDIPAVMVLSCSDRHISE) lie on the Extracellular side of the membrane. Residues 195 to 215 (LVLIYVVSFNIFIALLVILIS) form a helical membrane-spanning segment. The Cytoplasmic segment spans residues 216–235 (YTFIFITILKMHSASVYQKP). A helical transmembrane segment spans residues 236–256 (LSTCASHFIAVGIFYGTIIFM). Over 257–269 (YLQPSSSHSMDTD) the chain is Extracellular. Residues 270–290 (KMAPVFYTMVIPMLNPLVYSL) form a helical membrane-spanning segment. At 291-314 (RNKEVKSAFKKVVEKAKLSVGWSV) the chain is on the cytoplasmic side.

The protein belongs to the G-protein coupled receptor 1 family.

The protein resides in the cell membrane. In terms of biological role, odorant receptor. The polypeptide is Olfactory receptor 5B3 (OR5B3) (Homo sapiens (Human)).